Consider the following 265-residue polypeptide: Enolase-phosphatase E1 (265 aa).

Mg(2+) is bound by residues D18 and E20. Substrate-binding positions include 144–145 (SS) and K188. D215 contributes to the Mg(2+) binding site.

The protein belongs to the HAD-like hydrolase superfamily. MasA/MtnC family. As to quaternary structure, monomer. Mg(2+) is required as a cofactor.

It is found in the cytoplasm. It localises to the nucleus. It catalyses the reaction 5-methylsulfanyl-2,3-dioxopentyl phosphate + H2O = 1,2-dihydroxy-5-(methylsulfanyl)pent-1-en-3-one + phosphate. The protein operates within amino-acid biosynthesis; L-methionine biosynthesis via salvage pathway; L-methionine from S-methyl-5-thio-alpha-D-ribose 1-phosphate: step 3/6. It functions in the pathway amino-acid biosynthesis; L-methionine biosynthesis via salvage pathway; L-methionine from S-methyl-5-thio-alpha-D-ribose 1-phosphate: step 4/6. Functionally, bifunctional enzyme that catalyzes the enolization of 2,3-diketo-5-methylthiopentyl-1-phosphate (DK-MTP-1-P) into the intermediate 2-hydroxy-3-keto-5-methylthiopentenyl-1-phosphate (HK-MTPenyl-1-P), which is then dephosphorylated to form the acireductone 1,2-dihydroxy-3-keto-5-methylthiopentene (DHK-MTPene). This is Enolase-phosphatase E1 from Candida albicans (strain SC5314 / ATCC MYA-2876) (Yeast).